Reading from the N-terminus, the 185-residue chain is Translation initiation factor IF-3, chloroplastic (185 aa).

It belongs to the IF-3 family. Monomer.

Its subcellular location is the plastid. The protein localises to the chloroplast. Functionally, IF-3 binds to the 30S ribosomal subunit and shifts the equilibrium between 70S ribosomes and their 50S and 30S subunits in favor of the free subunits, thus enhancing the availability of 30S subunits on which protein synthesis initiation begins. This Cyanidium caldarium (Red alga) protein is Translation initiation factor IF-3, chloroplastic.